The sequence spans 177 residues: Transcription termination/antitermination protein NusG (177 aa).

In terms of domain architecture, KOW spans E128–V156.

It belongs to the NusG family.

Participates in transcription elongation, termination and antitermination. Stimulates RNA polymerase pausing at U107 and U144 in the trp leader. NusG-stimulated pausing is sequence specific. Does not affect trp leader termination. The sequence is that of Transcription termination/antitermination protein NusG from Bacillus subtilis (strain 168).